The sequence spans 34 residues: Antimicrobial peptide Alo-2 (34 aa).

3 cysteine pairs are disulfide-bonded: C1–C18, C8–C22, and C17–C33.

It is found in the secreted. Its function is as follows. Has antifungal activity against C.glabrata. The protein is Antimicrobial peptide Alo-2 of Acrocinus longimanus (Giant harlequin beetle).